A 349-amino-acid chain; its full sequence is NADP-dependent alcohol dehydrogenase C 1 (349 aa).

Zn(2+)-binding residues include Cys41, His63, Cys94, Cys97, Cys100, Cys108, and Cys159. Residue Lys210 forms an Isoglutamyl lysine isopeptide (Lys-Gln) (interchain with Q-Cter in protein Pup) linkage.

The protein belongs to the zinc-containing alcohol dehydrogenase family. It depends on Zn(2+) as a cofactor.

It carries out the reaction a primary alcohol + NADP(+) = an aldehyde + NADPH + H(+). Functionally, prefers aldehydes over alcohols. The protein is NADP-dependent alcohol dehydrogenase C 1 (adhc1) of Mycolicibacterium smegmatis (strain ATCC 700084 / mc(2)155) (Mycobacterium smegmatis).